Reading from the N-terminus, the 351-residue chain is Cytochrome c biogenesis protein CcsA (351 aa).

Transmembrane regions (helical) follow at residues 12–32 (NISFGILFATMLIYWLGAAFP), 37–57 (LSILGSTGMAIANLCIATLLG), 68–88 (ISNLYESLFFLTWGITTIHLI), 97–117 (LVGVFTSPIAMGISAFAALTL), 143–163 (MMLSYATLIVGALLAIAFLII), 259–279 (IIGLGFPLLTIGIIAGAVWAN), 294–314 (WALITWLVFAAYLHARITKGW), and 320–340 (AILAATGFAVVWVCYLGVNLL).

Belongs to the CcmF/CycK/Ccl1/NrfE/CcsA family. As to quaternary structure, may interact with ccs1.

The protein localises to the cellular thylakoid membrane. Required during biogenesis of c-type cytochromes (cytochrome c6 and cytochrome f) at the step of heme attachment. This Trichodesmium erythraeum (strain IMS101) protein is Cytochrome c biogenesis protein CcsA.